The chain runs to 379 residues: 1-deoxy-D-xylulose 5-phosphate reductoisomerase (379 aa).

7 residues coordinate NADPH: Thr-10, Gly-11, Ser-12, Ile-13, Arg-38, Asn-39, and Asn-121. 1-deoxy-D-xylulose 5-phosphate is bound at residue Lys-122. Residue Glu-123 participates in NADPH binding. A Mn(2+)-binding site is contributed by Asp-147. Residues Ser-148, Glu-149, Ser-173, and His-196 each coordinate 1-deoxy-D-xylulose 5-phosphate. Glu-149 provides a ligand contact to Mn(2+). Position 202 (Gly-202) interacts with NADPH. 1-deoxy-D-xylulose 5-phosphate is bound by residues Ser-209, Asn-214, Lys-215, and Glu-218. Glu-218 contributes to the Mn(2+) binding site.

The protein belongs to the DXR family. Requires Mg(2+) as cofactor. Mn(2+) is required as a cofactor.

It catalyses the reaction 2-C-methyl-D-erythritol 4-phosphate + NADP(+) = 1-deoxy-D-xylulose 5-phosphate + NADPH + H(+). It functions in the pathway isoprenoid biosynthesis; isopentenyl diphosphate biosynthesis via DXP pathway; isopentenyl diphosphate from 1-deoxy-D-xylulose 5-phosphate: step 1/6. In terms of biological role, catalyzes the NADPH-dependent rearrangement and reduction of 1-deoxy-D-xylulose-5-phosphate (DXP) to 2-C-methyl-D-erythritol 4-phosphate (MEP). The chain is 1-deoxy-D-xylulose 5-phosphate reductoisomerase from Chlamydia trachomatis serovar L2 (strain ATCC VR-902B / DSM 19102 / 434/Bu).